Here is a 224-residue protein sequence, read N- to C-terminus: Viral late gene transcription factor 3 (224 aa).

It belongs to the orthopoxvirus VLTF-3/OPG127 family. Interacts with the late transcription elongation factor VLTF-4/OPG110. Interacts with the late transcription factors VLTF-1/OPG093.

Functionally, acts with RNA polymerase to initiate transcription from late gene promoters. This chain is Viral late gene transcription factor 3 (OPG127), found in Monkeypox virus.